We begin with the raw amino-acid sequence, 196 residues long: Imidazoleglycerol-phosphate dehydratase (196 aa).

This sequence belongs to the imidazoleglycerol-phosphate dehydratase family.

It localises to the cytoplasm. The enzyme catalyses D-erythro-1-(imidazol-4-yl)glycerol 3-phosphate = 3-(imidazol-4-yl)-2-oxopropyl phosphate + H2O. The protein operates within amino-acid biosynthesis; L-histidine biosynthesis; L-histidine from 5-phospho-alpha-D-ribose 1-diphosphate: step 6/9. The polypeptide is Imidazoleglycerol-phosphate dehydratase (Chlorobium chlorochromatii (strain CaD3)).